The sequence spans 379 residues: UDP-4-amino-4-deoxy-L-arabinose--oxoglutarate aminotransferase (379 aa).

K182 bears the N6-(pyridoxal phosphate)lysine mark.

Belongs to the DegT/DnrJ/EryC1 family. ArnB subfamily. In terms of assembly, homodimer. Requires pyridoxal 5'-phosphate as cofactor.

It carries out the reaction UDP-4-amino-4-deoxy-beta-L-arabinose + 2-oxoglutarate = UDP-beta-L-threo-pentopyranos-4-ulose + L-glutamate. It participates in nucleotide-sugar biosynthesis; UDP-4-deoxy-4-formamido-beta-L-arabinose biosynthesis; UDP-4-deoxy-4-formamido-beta-L-arabinose from UDP-alpha-D-glucuronate: step 2/3. The protein operates within bacterial outer membrane biogenesis; lipopolysaccharide biosynthesis. Functionally, catalyzes the conversion of UDP-4-keto-arabinose (UDP-Ara4O) to UDP-4-amino-4-deoxy-L-arabinose (UDP-L-Ara4N). The modified arabinose is attached to lipid A and is required for resistance to polymyxin and cationic antimicrobial peptides. This is UDP-4-amino-4-deoxy-L-arabinose--oxoglutarate aminotransferase from Shigella boydii serotype 4 (strain Sb227).